A 244-amino-acid polypeptide reads, in one-letter code: tRNA (guanine-N(1)-)-methyltransferase (244 aa).

S-adenosyl-L-methionine-binding positions include Gly-112 and 131–136 (LGDFIL). The interval 211–244 (IKRTSDRRPDLLEKWQQEKKPGSREQGSREQGEK) is disordered.

This sequence belongs to the RNA methyltransferase TrmD family. As to quaternary structure, homodimer.

Its subcellular location is the cytoplasm. It catalyses the reaction guanosine(37) in tRNA + S-adenosyl-L-methionine = N(1)-methylguanosine(37) in tRNA + S-adenosyl-L-homocysteine + H(+). Functionally, specifically methylates guanosine-37 in various tRNAs. The sequence is that of tRNA (guanine-N(1)-)-methyltransferase from Trichormus variabilis (strain ATCC 29413 / PCC 7937) (Anabaena variabilis).